A 400-amino-acid chain; its full sequence is Phosphoglycerate kinase (400 aa).

Substrate-binding positions include 21–23 (DLN), R36, 59–62 (HLGR), R114, and R147. ATP contacts are provided by residues K202, E329, and 355 to 358 (GGDT).

The protein belongs to the phosphoglycerate kinase family. As to quaternary structure, monomer.

It localises to the cytoplasm. The catalysed reaction is (2R)-3-phosphoglycerate + ATP = (2R)-3-phospho-glyceroyl phosphate + ADP. It participates in carbohydrate degradation; glycolysis; pyruvate from D-glyceraldehyde 3-phosphate: step 2/5. This is Phosphoglycerate kinase from Psychrobacter cryohalolentis (strain ATCC BAA-1226 / DSM 17306 / VKM B-2378 / K5).